The following is a 223-amino-acid chain: Endonuclease V (223 aa).

Mg(2+)-binding residues include Asp45 and Asp113.

Belongs to the endonuclease V family. Mg(2+) serves as cofactor.

The protein resides in the cytoplasm. The enzyme catalyses Endonucleolytic cleavage at apurinic or apyrimidinic sites to products with a 5'-phosphate.. In terms of biological role, DNA repair enzyme involved in the repair of deaminated bases. Selectively cleaves double-stranded DNA at the second phosphodiester bond 3' to a deoxyinosine leaving behind the intact lesion on the nicked DNA. This chain is Endonuclease V, found in Dehalococcoides mccartyi (strain ATCC BAA-2100 / JCM 16839 / KCTC 5957 / BAV1).